Consider the following 2157-residue polypeptide: Polyketide synthase 2 (2157 aa).

An N-terminal acylcarrier protein transacylase domain (SAT) region spans residues Phe7–His244. In terms of domain architecture, Ketosynthase family 3 (KS3) spans Asp374–Asp807. Residues Cys546, His681, and His723 each act as for beta-ketoacyl synthase activity in the active site. The segment at Gly908–Trp1213 is malonyl-CoA:ACP transacylase (MAT) domain. The For acyl/malonyl transferase activity role is filled by Ser998. A product template (PT) domain region spans residues Thr1290–Pro1605. An N-terminal hotdog fold region spans residues Gln1294–Ser1428. The PKS/mFAS DH domain maps to Gln1294 to Asn1600. His1327 (proton acceptor; for dehydratase activity) is an active-site residue. The tract at residues Thr1455–Asn1600 is C-terminal hotdog fold. Asp1514 serves as the catalytic Proton donor; for dehydratase activity. A disordered region spans residues Ala1626 to Thr1652. Residues Ala1643–Thr1652 are compositionally biased toward polar residues. The 78-residue stretch at Ser1649–Gln1726 folds into the Carrier 1 domain. An O-(pantetheine 4'-phosphoryl)serine modification is found at Ser1686. Positions Ala1733 to Thr1762 are disordered. Over residues Glu1735–Val1755 the composition is skewed to polar residues. In terms of domain architecture, Carrier 2 spans Asp1765–Glu1839. Ser1799 bears the O-(pantetheine 4'-phosphoryl)serine mark. The disordered stretch occupies residues Ala1840–Glu1859. A thioesterase (TE) domain region spans residues Ala1875–Glu2151. Ser1981 serves as the catalytic For thioesterase activity.

Its function is as follows. Polyketide synthase; part of the Pks2 gene cluster that mediates the formation of infectious structures (appressoria), enabling these fungi to kill insects faster. The product of the Pks2 gene cluster is different from the one of Pks1 and has still not been identified. The protein is Polyketide synthase 2 of Metarhizium robertsii (strain ARSEF 23 / ATCC MYA-3075) (Metarhizium anisopliae (strain ARSEF 23)).